The sequence spans 156 residues: 6,7-dimethyl-8-ribityllumazine synthase (156 aa).

Residues F23, 57 to 59 (AYE), and 81 to 83 (AII) each bind 5-amino-6-(D-ribitylamino)uracil. 86–87 (GT) serves as a coordination point for (2S)-2-hydroxy-3-oxobutyl phosphate. Catalysis depends on H89, which acts as the Proton donor. A 5-amino-6-(D-ribitylamino)uracil-binding site is contributed by F114. R128 is a binding site for (2S)-2-hydroxy-3-oxobutyl phosphate.

This sequence belongs to the DMRL synthase family.

The enzyme catalyses (2S)-2-hydroxy-3-oxobutyl phosphate + 5-amino-6-(D-ribitylamino)uracil = 6,7-dimethyl-8-(1-D-ribityl)lumazine + phosphate + 2 H2O + H(+). It participates in cofactor biosynthesis; riboflavin biosynthesis; riboflavin from 2-hydroxy-3-oxobutyl phosphate and 5-amino-6-(D-ribitylamino)uracil: step 1/2. Functionally, catalyzes the formation of 6,7-dimethyl-8-ribityllumazine by condensation of 5-amino-6-(D-ribitylamino)uracil with 3,4-dihydroxy-2-butanone 4-phosphate. This is the penultimate step in the biosynthesis of riboflavin. This Helicobacter pylori (strain G27) protein is 6,7-dimethyl-8-ribityllumazine synthase.